A 105-amino-acid polypeptide reads, in one-letter code: Urease subunit beta (105 aa).

This sequence belongs to the urease beta subunit family. In terms of assembly, heterotrimer of UreA (gamma), UreB (beta) and UreC (alpha) subunits. Three heterotrimers associate to form the active enzyme.

It localises to the cytoplasm. The enzyme catalyses urea + 2 H2O + H(+) = hydrogencarbonate + 2 NH4(+). It participates in nitrogen metabolism; urea degradation; CO(2) and NH(3) from urea (urease route): step 1/1. This Pseudomonas putida (strain ATCC 47054 / DSM 6125 / CFBP 8728 / NCIMB 11950 / KT2440) protein is Urease subunit beta.